Reading from the N-terminus, the 164-residue chain is Small ribosomal subunit protein uS5 (164 aa).

One can recognise an S5 DRBM domain in the interval 11-74 (LKEKLISVNR…EKARKNMIII (64 aa)).

Belongs to the universal ribosomal protein uS5 family. As to quaternary structure, part of the 30S ribosomal subunit. Contacts proteins S4 and S8.

Functionally, with S4 and S12 plays an important role in translational accuracy. In terms of biological role, located at the back of the 30S subunit body where it stabilizes the conformation of the head with respect to the body. The chain is Small ribosomal subunit protein uS5 from Buchnera aphidicola subsp. Cinara cedri (strain Cc).